Consider the following 314-residue polypeptide: MPFGQPGFLWRVPDAHIAMRGLVMAPLLILLVGGTEAFRICAFNAHRLTLAKLTKESVMDTLVQILARCDIMVLQEVVDSSQNTVPFLLQKLKSSRSYSFLNSSLLGRSTYKEKYVYIYRSDKTQVLNFYQYNDTDDIFAREPFVAHFTLPSKTLPSVVLVPLHTTPKDVEKELNALYDVFLDVYQRWQNENVILLGDFNADCASLTKKRLKSLLLRTKAGFHWVIPDGEDTTVRASTNCTYDRIVVHGQGCQMLLKAAATFDFPKRFQLTEEEALRISDHYPVEVELSQATPLSIPPHYLAALLLSLLPSQLD.

A signal peptide spans 1-37 (MPFGQPGFLWRVPDAHIAMRGLVMAPLLILLVGGTEA). Asn-102 carries N-linked (GlcNAc...) asparagine glycosylation. Residue Glu-113 is part of the active site. The N-linked (GlcNAc...) asparagine glycan is linked to Asn-133. Residue His-164 is part of the active site. An intrachain disulfide couples Cys-203 to Cys-240. Asn-239 carries N-linked (GlcNAc...) asparagine glycosylation.

The protein belongs to the DNase I family. Highly expressed in heart and skeletal muscles. Low expression in brain and thymus. Intermediated expression in other tissues.

The protein localises to the endoplasmic reticulum. This chain is Deoxyribonuclease-1-like 1 (Dnase1l1), found in Mus musculus (Mouse).